The sequence spans 178 residues: MAASVRILGIDPGSRVTGFGVIDVRGRDHFYVASGCIKTPADAPLADRIAVIVRHIGEVVTVYKPQQAAVEQVFVNVNPASTLMLGQARGAALAALVSHKLPVSEYTALQVKQAVVGKGKAAKEQVQHMVVQMLGLSGTPQPDAADGLAVALTHALRNHGLAAKLNPSGMQVKRGRFQ.

Active-site residues include D11, E71, and D143. The Mg(2+) site is built by D11, E71, and D143.

It belongs to the RuvC family. Homodimer which binds Holliday junction (HJ) DNA. The HJ becomes 2-fold symmetrical on binding to RuvC with unstacked arms; it has a different conformation from HJ DNA in complex with RuvA. In the full resolvosome a probable DNA-RuvA(4)-RuvB(12)-RuvC(2) complex forms which resolves the HJ. Requires Mg(2+) as cofactor.

It is found in the cytoplasm. It carries out the reaction Endonucleolytic cleavage at a junction such as a reciprocal single-stranded crossover between two homologous DNA duplexes (Holliday junction).. The RuvA-RuvB-RuvC complex processes Holliday junction (HJ) DNA during genetic recombination and DNA repair. Endonuclease that resolves HJ intermediates. Cleaves cruciform DNA by making single-stranded nicks across the HJ at symmetrical positions within the homologous arms, yielding a 5'-phosphate and a 3'-hydroxyl group; requires a central core of homology in the junction. The consensus cleavage sequence is 5'-(A/T)TT(C/G)-3'. Cleavage occurs on the 3'-side of the TT dinucleotide at the point of strand exchange. HJ branch migration catalyzed by RuvA-RuvB allows RuvC to scan DNA until it finds its consensus sequence, where it cleaves and resolves the cruciform DNA. This Neisseria meningitidis serogroup B (strain ATCC BAA-335 / MC58) protein is Crossover junction endodeoxyribonuclease RuvC.